A 130-amino-acid chain; its full sequence is Small ribosomal subunit protein uS11c (130 aa).

This sequence belongs to the universal ribosomal protein uS11 family. Part of the 30S ribosomal subunit.

Its subcellular location is the plastid. It is found in the chloroplast. This chain is Small ribosomal subunit protein uS11c, found in Pinus koraiensis (Korean pine).